Reading from the N-terminus, the 320-residue chain is Formimidoylglutamase (320 aa).

Mn(2+)-binding residues include His125, Asp153, His155, Asp157, Asp244, and Asp246.

The protein belongs to the arginase family. Requires Mn(2+) as cofactor.

The enzyme catalyses N-formimidoyl-L-glutamate + H2O = formamide + L-glutamate. It participates in amino-acid degradation; L-histidine degradation into L-glutamate; L-glutamate from N-formimidoyl-L-glutamate (hydrolase route): step 1/1. Its function is as follows. Catalyzes the conversion of N-formimidoyl-L-glutamate to L-glutamate and formamide. This chain is Formimidoylglutamase, found in Rhodococcus jostii (strain RHA1).